The chain runs to 373 residues: Caspase-4 (373 aa).

The required for LPS-binding stretch occupies residues 1 to 59; sequence MAENKHPDKPLKVLEQLGKEVLTEYLEKLVQSNVLKLKEEDKQKFNNAERSDKRWVFVD. Positions 1–80 are excised as a propeptide; it reads MAENKHPDKP…MLLQTFFSVD (80 aa). The 91-residue stretch at 1-91 folds into the CARD domain; the sequence is MAENKHPDKP…GSHHGEANLE (91 aa). Phosphoserine is present on Ser-83. Residues His-206 and Cys-254 contribute to the active site. The propeptide occupies 267–285; sequence SSKPQLCRGVDLPRNMEAD. At Arg-310 the chain carries (Microbial infection) ADP-riboxanated arginine.

Belongs to the peptidase C14A family. Heterotetramer that consists of two anti-parallel arranged heterodimers, each one formed by a 20 kDa (Caspase-4 subunit p20) and a 10 kDa (Caspase-4 subunit p10) subunit. Upon direct LPS-binding, forms large homooligomers, resulting in its activation. These oligomers are often referred to as 'non-canonical inflammasomes'. In its precursor form, interacts with TMEM214; this interaction is required for association with the endoplasmic reticulum membrane. Interacts with CASP1. Interacts with NOD2. Interacts with Serpinb1a, Serpinb1b and Serpinb1c; these interactions regulate CASP4 activity. As to quaternary structure, heterotetramer that consists of two anti-parallel arranged heterodimers, each one formed by a 20 kDa (Caspase-4 subunit p20) and a 10 kDa (Caspase-4 subunit p10) subunit. In terms of processing, in response to activation signals, undergoes autoproteolytic cleavage and activation. (Microbial infection) ADP-riboxanation by S.flexneri OspC3 blocks CASP4 autoprocessing, preventing CASP4 activation and ability to recognize and cleave GSDMD, thereby thwarting the inflammasome/pyroptosis-mediated defense. Widely expressed, including in thymus, lung and spleen (at protein level). Very low levels, if any, in the brain.

The protein localises to the cytoplasm. The protein resides in the cytosol. It localises to the endoplasmic reticulum membrane. It is found in the mitochondrion. Its subcellular location is the inflammasome. The protein localises to the secreted. The enzyme catalyses Strict requirement for Asp at the P1 position and has a preferred cleavage sequence of (Ile/Leu/Val/Phe)-Gly-His-Asp-|-.. Activated by homooligomerization induced by direct binding to cytosolic LPS, in a TLR4-independent manner. In addition to LPS, CASP4/CASP11 may also be activated by oxidized phospholipid 1-palmitoyl-2-arachidonoyl- sn-glycero-3-phosphorylcholine, an oxidized phospholipid (oxPAPC), in dendritic cells, promoting adaptive immunity. The role of oxPAPC is however unclear and another report suggests that oxPAPC competes with LPS-binding and inhibits the non-canonical inflammasome in macrophages. Its function is as follows. Inflammatory caspase that acts as the effector of the non-canonical inflammasome by mediating lipopolysaccharide (LPS)-induced pyroptosis. Also indirectly activates the NLRP3 and NLRP6 inflammasomes. Acts as a thiol protease that cleaves a tetrapeptide after an Asp residue at position P1: catalyzes cleavage of CGAS and GSDMD. In contrast to its human ortholog, does not cleave IL18. Effector of the non-canonical inflammasome independently of NLRP3 inflammasome and CASP1: the non-canonical inflammasome promotes pyroptosis through GSDMD cleavage without involving secretion of cytokine IL1B and IL18. In the non-canonical inflammasome, CASP4/CASP11 is activated by direct binding to the lipid A moiety of LPS without the need of an upstream sensor. LPS-binding promotes CASP4/CASP11 activation and CASP4/CASP11-mediated cleavage of GSDMD, followed by pyroptosis of infected cells and their extrusion into the gut lumen. Also indirectly promotes secretion of mature cytokines (IL1A, IL18 and HMGB1) downstream of GSDMD-mediated pyroptosis via activation of the NLRP3 and NLRP6 inflammasomes. Involved in NLRP3-dependent CASP1 activation and IL1B and IL18 secretion in response to non-canonical activators, such as UVB radiation or cholera enterotoxin. Involved in NLRP6 inflammasome-dependent activation in response to lipoteichoic acid (LTA), a cell-wall component of Gram-positive bacteria, which leads to CASP1 activation and IL1B and IL18 secretion. Involved in LPS-induced IL6 secretion; this activity may not require caspase enzymatic activity. The non-canonical inflammasome is required for innate immunity to cytosolic, but not vacuolar, bacteria. Plays a crucial role in the restriction of S.typhimurium replication in colonic epithelial cells during infection. Activation of the non-canonical inflammasome in brain endothelial cells can lead to excessive pyroptosis, leading to blood-brain barrier breakdown. Pyroptosis limits bacterial replication, while cytokine secretion promotes the recruitment and activation of immune cells and triggers mucosal inflammation. May also act as an activator of adaptive immunity in dendritic cells, following activation by oxidized phospholipid 1-palmitoyl-2-arachidonoyl- sn-glycero-3-phosphorylcholine, an oxidized phospholipid (oxPAPC). Cleavage of GSDMD is not strictly dependent on the consensus cleavage site but depends on an exosite interface on CASP4/CASP11 that recognizes and binds the Gasdermin-D, C-terminal (GSDMD-CT) part. In contrast, it does not directly process IL1B. During non-canonical inflammasome activation, cuts CGAS and may play a role in the regulation of antiviral innate immune activation. The polypeptide is Caspase-4 (Mus musculus (Mouse)).